Here is a 196-residue protein sequence, read N- to C-terminus: Protein GrpE (196 aa).

A disordered region spans residues 1–41 (MSSKEQKTPEGQAPEEIITEQHDDVEAVEPEVSAEQVDPRD).

It belongs to the GrpE family. In terms of assembly, homodimer.

It is found in the cytoplasm. Its function is as follows. Participates actively in the response to hyperosmotic and heat shock by preventing the aggregation of stress-denatured proteins, in association with DnaK and GrpE. It is the nucleotide exchange factor for DnaK and may function as a thermosensor. Unfolded proteins bind initially to DnaJ; upon interaction with the DnaJ-bound protein, DnaK hydrolyzes its bound ATP, resulting in the formation of a stable complex. GrpE releases ADP from DnaK; ATP binding to DnaK triggers the release of the substrate protein, thus completing the reaction cycle. Several rounds of ATP-dependent interactions between DnaJ, DnaK and GrpE are required for fully efficient folding. The protein is Protein GrpE of Klebsiella pneumoniae subsp. pneumoniae (strain ATCC 700721 / MGH 78578).